The primary structure comprises 62 residues: UPF0337 protein XCC0070 (62 aa).

Positions 32-62 (LEGAAEKNIGKVQRKAGELADDVRDATKSTR) are disordered.

This sequence belongs to the UPF0337 (CsbD) family.

This Xanthomonas campestris pv. campestris (strain ATCC 33913 / DSM 3586 / NCPPB 528 / LMG 568 / P 25) protein is UPF0337 protein XCC0070.